The primary structure comprises 442 residues: D-serine dehydratase (442 aa).

Position 118 is an N6-(pyridoxal phosphate)lysine (Lys-118).

Belongs to the serine/threonine dehydratase family. DsdA subfamily. As to quaternary structure, monomer. Pyridoxal 5'-phosphate is required as a cofactor.

The catalysed reaction is D-serine = pyruvate + NH4(+). This is D-serine dehydratase from Escherichia coli O157:H7.